Here is a 456-residue protein sequence, read N- to C-terminus: Bifunctional protein GlmU (456 aa).

The segment at 1-231 (MERTCLAIIL…EEELTGCNTR (231 aa)) is pyrophosphorylase. Residues 10–13 (LAAG), K24, Q77, and 82–83 (GT) contribute to the UDP-N-acetyl-alpha-D-glucosamine site. A Mg(2+)-binding site is contributed by D107. UDP-N-acetyl-alpha-D-glucosamine contacts are provided by G143, E157, N172, and N229. Residue N229 coordinates Mg(2+). Residues 232 to 252 (AELAYIERLWQQRRRQELMLA) form a linker region. The N-acetyltransferase stretch occupies residues 253–456 (GVSMVAPETV…AARKKVKAAE (204 aa)). R318 and K336 together coordinate UDP-N-acetyl-alpha-D-glucosamine. The active-site Proton acceptor is H348. UDP-N-acetyl-alpha-D-glucosamine is bound by residues Y351 and N362. Acetyl-CoA contacts are provided by residues A365, 371-372 (NY), S390, S408, and R425.

It in the N-terminal section; belongs to the N-acetylglucosamine-1-phosphate uridyltransferase family. This sequence in the C-terminal section; belongs to the transferase hexapeptide repeat family. In terms of assembly, homotrimer. The cofactor is Mg(2+).

The protein resides in the cytoplasm. It carries out the reaction alpha-D-glucosamine 1-phosphate + acetyl-CoA = N-acetyl-alpha-D-glucosamine 1-phosphate + CoA + H(+). The catalysed reaction is N-acetyl-alpha-D-glucosamine 1-phosphate + UTP + H(+) = UDP-N-acetyl-alpha-D-glucosamine + diphosphate. Its pathway is nucleotide-sugar biosynthesis; UDP-N-acetyl-alpha-D-glucosamine biosynthesis; N-acetyl-alpha-D-glucosamine 1-phosphate from alpha-D-glucosamine 6-phosphate (route II): step 2/2. The protein operates within nucleotide-sugar biosynthesis; UDP-N-acetyl-alpha-D-glucosamine biosynthesis; UDP-N-acetyl-alpha-D-glucosamine from N-acetyl-alpha-D-glucosamine 1-phosphate: step 1/1. It participates in bacterial outer membrane biogenesis; LPS lipid A biosynthesis. Its function is as follows. Catalyzes the last two sequential reactions in the de novo biosynthetic pathway for UDP-N-acetylglucosamine (UDP-GlcNAc). The C-terminal domain catalyzes the transfer of acetyl group from acetyl coenzyme A to glucosamine-1-phosphate (GlcN-1-P) to produce N-acetylglucosamine-1-phosphate (GlcNAc-1-P), which is converted into UDP-GlcNAc by the transfer of uridine 5-monophosphate (from uridine 5-triphosphate), a reaction catalyzed by the N-terminal domain. This Sinorhizobium fredii (strain NBRC 101917 / NGR234) protein is Bifunctional protein GlmU.